We begin with the raw amino-acid sequence, 424 residues long: Serine--tRNA ligase (424 aa).

An L-serine-binding site is contributed by Thr231–Glu233. Residue Arg262 to Glu264 coordinates ATP. Glu285 is an L-serine binding site. Residue Glu349–Ser352 participates in ATP binding. L-serine is bound at residue Ser385.

The protein belongs to the class-II aminoacyl-tRNA synthetase family. Type-1 seryl-tRNA synthetase subfamily. Homodimer. The tRNA molecule binds across the dimer.

It is found in the cytoplasm. The catalysed reaction is tRNA(Ser) + L-serine + ATP = L-seryl-tRNA(Ser) + AMP + diphosphate + H(+). The enzyme catalyses tRNA(Sec) + L-serine + ATP = L-seryl-tRNA(Sec) + AMP + diphosphate + H(+). It functions in the pathway aminoacyl-tRNA biosynthesis; selenocysteinyl-tRNA(Sec) biosynthesis; L-seryl-tRNA(Sec) from L-serine and tRNA(Sec): step 1/1. Its function is as follows. Catalyzes the attachment of serine to tRNA(Ser). Is also able to aminoacylate tRNA(Sec) with serine, to form the misacylated tRNA L-seryl-tRNA(Sec), which will be further converted into selenocysteinyl-tRNA(Sec). The sequence is that of Serine--tRNA ligase from Bacillus cereus (strain ZK / E33L).